Reading from the N-terminus, the 685-residue chain is Protein arginine N-methyltransferase 7 (685 aa).

2 SAM-dependent MTase PRMT-type domains span residues 14–355 (QATW…YSLW) and 364–685 (AESI…LKSI).

Belongs to the class I-like SAM-binding methyltransferase superfamily. Protein arginine N-methyltransferase family. PRMT7 subfamily.

Its function is as follows. Essential arginine methyltransferase that can both catalyze the formation of omega-N monomethylarginine (MMA) and symmetrical dimethylarginine (sDMA). Specifically mediates the symmetrical dimethylation of arginine residues in the small nuclear ribonucleoproteins SmD1 and SmD3. The sequence is that of Protein arginine N-methyltransferase 7 (Art7) from Drosophila willistoni (Fruit fly).